We begin with the raw amino-acid sequence, 623 residues long: Xaa-Pro aminopeptidase 1 (623 aa).

Arg-77 contributes to the a peptide binding site. Lys-304 carries the N6-acetyllysine modification. Residue His-395 participates in a peptide binding. The Mn(2+) site is built by Asp-415, Asp-426, and His-489. His-489, His-498, and Glu-523 together coordinate a peptide. Residues Glu-523 and Glu-537 each coordinate Mn(2+).

It belongs to the peptidase M24B family. As to quaternary structure, homodimer. Mn(2+) serves as cofactor.

The protein resides in the cytoplasm. The protein localises to the cytosol. It carries out the reaction Release of any N-terminal amino acid, including proline, that is linked to proline, even from a dipeptide or tripeptide.. Metalloaminopeptidase that catalyzes the removal of a penultimate prolyl residue from the N-termini of peptides, such as Arg-Pro-Pro. Contributes to the degradation of bradykinin. The protein is Xaa-Pro aminopeptidase 1 of Mus musculus (Mouse).